We begin with the raw amino-acid sequence, 447 residues long: Chitobiosyldiphosphodolichol beta-mannosyltransferase (447 aa).

Topologically, residues M1 to T2 are cytoplasmic. A helical; Signal-anchor for type II membrane protein membrane pass occupies residues L3–L23. The Lumenal segment spans residues P24 to T447.

It belongs to the glycosyltransferase group 1 family. Glycosyltransferase 33 subfamily.

Its subcellular location is the endoplasmic reticulum membrane. It carries out the reaction an N,N'-diacetylchitobiosyl-diphospho-di-trans,poly-cis-dolichol + GDP-alpha-D-mannose = a beta-D-Man-(1-&gt;4)-beta-D-GlcNAc-(1-&gt;4)-alpha-D-GlcNAc-diphospho-di-trans,poly-cis-dolichol + GDP + H(+). The protein operates within protein modification; protein glycosylation. In terms of biological role, participates in the formation of the lipid-linked precursor oligosaccharide for N-glycosylation. Involved in assembling the dolichol-pyrophosphate-GlcNAc(2)-Man(5) intermediate on the cytoplasmic surface of the ER. The chain is Chitobiosyldiphosphodolichol beta-mannosyltransferase from Arthroderma benhamiae (strain ATCC MYA-4681 / CBS 112371) (Trichophyton mentagrophytes).